The following is a 660-amino-acid chain: Bifunctional polymyxin resistance protein ArnA (660 aa).

The segment at 1–304 (MKAVIFAYHD…TLGLVAGARL (304 aa)) is formyltransferase ArnAFT. Histidine 104 acts as the Proton donor; for formyltransferase activity in catalysis. (6R)-10-formyltetrahydrofolate is bound by residues arginine 114 and 136-140 (VKRAD). The tract at residues 314–660 (RRIRVLILGV…RSVDIAERAS (347 aa)) is dehydrogenase ArnADH. NAD(+) contacts are provided by residues aspartate 347 and 368-369 (DI). Residues alanine 393, tyrosine 398, and 432 to 433 (TS) each bind UDP-alpha-D-glucuronate. Glutamate 434 functions as the Proton acceptor; for decarboxylase activity in the catalytic mechanism. UDP-alpha-D-glucuronate-binding positions include arginine 460, asparagine 492, 526-535 (KLIDGGQQKR), and tyrosine 613. Residue arginine 619 is the Proton donor; for decarboxylase activity of the active site.

This sequence in the N-terminal section; belongs to the Fmt family. UDP-L-Ara4N formyltransferase subfamily. It in the C-terminal section; belongs to the NAD(P)-dependent epimerase/dehydratase family. UDP-glucuronic acid decarboxylase subfamily. Homohexamer, formed by a dimer of trimers.

It carries out the reaction UDP-alpha-D-glucuronate + NAD(+) = UDP-beta-L-threo-pentopyranos-4-ulose + CO2 + NADH. It catalyses the reaction UDP-4-amino-4-deoxy-beta-L-arabinose + (6R)-10-formyltetrahydrofolate = UDP-4-deoxy-4-formamido-beta-L-arabinose + (6S)-5,6,7,8-tetrahydrofolate + H(+). The protein operates within nucleotide-sugar biosynthesis; UDP-4-deoxy-4-formamido-beta-L-arabinose biosynthesis; UDP-4-deoxy-4-formamido-beta-L-arabinose from UDP-alpha-D-glucuronate: step 1/3. It participates in nucleotide-sugar biosynthesis; UDP-4-deoxy-4-formamido-beta-L-arabinose biosynthesis; UDP-4-deoxy-4-formamido-beta-L-arabinose from UDP-alpha-D-glucuronate: step 3/3. Its pathway is bacterial outer membrane biogenesis; lipopolysaccharide biosynthesis. Its function is as follows. Bifunctional enzyme that catalyzes the oxidative decarboxylation of UDP-glucuronic acid (UDP-GlcUA) to UDP-4-keto-arabinose (UDP-Ara4O) and the addition of a formyl group to UDP-4-amino-4-deoxy-L-arabinose (UDP-L-Ara4N) to form UDP-L-4-formamido-arabinose (UDP-L-Ara4FN). The modified arabinose is attached to lipid A and is required for resistance to polymyxin and cationic antimicrobial peptides. In Salmonella schwarzengrund (strain CVM19633), this protein is Bifunctional polymyxin resistance protein ArnA.